The primary structure comprises 763 residues: Amine oxidase [copper-containing] 3 (763 aa).

Over 1-6 the chain is Cytoplasmic; the sequence is MNQKTT. The chain crosses the membrane as a helical; Signal-anchor for type II membrane protein span at residues 7–27; sequence LVLLALAVITIFALVCVLIAG. Residues 28–763 lie on the Extracellular side of the membrane; sequence RGGDGGEASQ…AFSHGGFFTN (736 aa). The N-linked (GlcNAc...) asparagine glycan is linked to asparagine 137. Cysteine 198 and cysteine 199 are disulfide-bonded. 2 N-linked (GlcNAc...) asparagine glycosylation sites follow: asparagine 232 and asparagine 294. The active-site Proton acceptor is aspartate 386. The cysteines at positions 404 and 430 are disulfide-linked. Tyrosine 471 serves as the catalytic Schiff-base intermediate with substrate; via topaquinone. The residue at position 471 (tyrosine 471) is a 2',4',5'-topaquinone. 2 residues coordinate Cu(2+): histidine 520 and histidine 522. Residues aspartate 529, leucine 530, aspartate 531, and glutamate 572 each contribute to the Ca(2+) site. N-linked (GlcNAc...) asparagine glycosylation is present at asparagine 618. The Ca(2+) site is built by glutamate 641, phenylalanine 663, and asparagine 665. Residue asparagine 666 is glycosylated (N-linked (GlcNAc...) asparagine). Residues glutamate 667, aspartate 673, and leucine 674 each coordinate Ca(2+). Histidine 684 is a Cu(2+) binding site. A disulfide bridge connects residues cysteine 734 and cysteine 741.

The protein belongs to the copper/topaquinone oxidase family. Homodimer; disulfide-linked. Probably forms heterodimers with AOC2. Cu(2+) is required as a cofactor. The cofactor is Ca(2+). Requires L-topaquinone as cofactor. In terms of processing, topaquinone (TPQ) is generated by copper-dependent autoxidation of a specific tyrosyl residue. Post-translationally, N- and O-glycosylated.

The protein resides in the cell membrane. The catalysed reaction is methylamine + O2 + H2O = formaldehyde + H2O2 + NH4(+). The enzyme catalyses benzylamine + O2 + H2O = benzaldehyde + H2O2 + NH4(+). It carries out the reaction 2-phenylethylamine + O2 + H2O = 2-phenylacetaldehyde + H2O2 + NH4(+). Its function is as follows. Catalyzes the oxidative deamination of primary amines to the corresponding aldehydes with the concomitant production of hydrogen peroxide and ammonia. Has a preference for the primary monoamines methylamine and benzylamine. Could also act on 2-phenylethylamine but much less efficiently. At endothelial cells surface can also function as a cell adhesion protein that participates in lymphocyte extravasation and recirculation by mediating the binding of lymphocytes to peripheral lymph node vascular endothelial cells in an L-selectin-independent fashion. The chain is Amine oxidase [copper-containing] 3 from Bos taurus (Bovine).